Reading from the N-terminus, the 245-residue chain is Photosystem II protein PSBS1 (245 aa).

The N-terminal 25 residues, 1–25 (MAMTLSTKAFAQRGVSARKNTVRVY), are a transit peptide targeting the chloroplast. 4 consecutive transmembrane segments (helical) span residues 72-92 (LFVG…EILT), 108-128 (GIEV…AAVL), 185-205 (LGFA…LAQF), and 217-237 (EFGL…EGSG).

It belongs to the ELIP/psbS family.

The protein resides in the plastid. The protein localises to the chloroplast thylakoid membrane. Required for non-photochemical quenching (NPQ), a mechanism that converts and dissipates the harmful excess absorbed light energy into heat and protect the photosynthetic apparatus from photo-oxidative damage. Seems involved in the activation of NPQ, possibly by promoting conformational changes required for activation of LHCSR3-dependent quenching in the antenna of photosystem II (PSII). In Chlamydomonas reinhardtii (Chlamydomonas smithii), this protein is Photosystem II protein PSBS1.